The primary structure comprises 198 residues: Dephospho-CoA kinase (198 aa).

The region spanning 3–198 is the DPCK domain; it reads LIGLTGGIAS…VDALWAGLRG (196 aa). 11–16 lines the ATP pocket; sequence ASGKST.

This sequence belongs to the CoaE family.

The protein resides in the cytoplasm. The catalysed reaction is 3'-dephospho-CoA + ATP = ADP + CoA + H(+). Its pathway is cofactor biosynthesis; coenzyme A biosynthesis; CoA from (R)-pantothenate: step 5/5. Catalyzes the phosphorylation of the 3'-hydroxyl group of dephosphocoenzyme A to form coenzyme A. In Leifsonia xyli subsp. xyli (strain CTCB07), this protein is Dephospho-CoA kinase.